A 368-amino-acid chain; its full sequence is Zinc finger protein 24 (368 aa).

K22 is covalently cross-linked (Glycyl lysine isopeptide (Lys-Gly) (interchain with G-Cter in SUMO2)). Residue K27 forms a Glycyl lysine isopeptide (Lys-Gly) (interchain with G-Cter in SUMO1); alternate linkage. Residue K27 forms a Glycyl lysine isopeptide (Lys-Gly) (interchain with G-Cter in SUMO2); alternate linkage. The region spanning 52–134 (RQRFRQFGYQ…TVLEDLESEL (83 aa)) is the SCAN box domain. Residues S132 and S142 each carry the phosphoserine modification. Glycyl lysine isopeptide (Lys-Gly) (interchain with G-Cter in SUMO2) cross-links involve residues K147, K177, and K236. The C2H2-type 1 zinc-finger motif lies at 251-273 (HICDECGKHFSQGSALILHQRIH). A necessary and sufficient for nuclear localization region spans residues 251-301 (HICDECGKHFSQGSALILHQRIHSGEKPYGCVECGKAFSRSSILVQHQRVH). S274 bears the Phosphoserine mark. Residues K277 and K286 each participate in a glycyl lysine isopeptide (Lys-Gly) (interchain with G-Cter in SUMO2) cross-link. C2H2-type zinc fingers lie at residues 279–301 (YGCVECGKAFSRSSILVQHQRVH), 307–329 (YKCLECGKAFSQNSGLINHQRIH), and 335–357 (YECVQCGKSYSQSSNLFRHQRRH). A Phosphoserine modification is found at S292. Y335 is modified (phosphotyrosine). Glycyl lysine isopeptide (Lys-Gly) (interchain with G-Cter in SUMO2) cross-links involve residues K361 and K367.

This sequence belongs to the krueppel C2H2-type zinc-finger protein family. Post-translationally, sumoylated.

Its subcellular location is the nucleus. Transcription factor required for myelination of differentiated oligodendrocytes. Required for the conversion of oligodendrocytes from the premyelinating to the myelinating state. In the developing central nervous system (CNS), involved in the maintenance in the progenitor stage by promoting the cell cycle. Specifically binds to the 5'-TCAT-3' DNA sequence. Has transcription repressor activity in vitro. This chain is Zinc finger protein 24 (Znf24), found in Rattus norvegicus (Rat).